Consider the following 425-residue polypeptide: MSLSEYLREFAEIFEEAAQELTSIFELPPDLLKDITEEDVGTDDSCNKKFLEVQKQKEDEEDEEILKGVDLTQQDSVREKIHEIQSMSQLSEKRKALLMQKMLMSGYLKYRRTHKKESDENQLSSSDLEKTYYDKEQEILGCSHYMRNCKVQCFDCHEWYTCRHCHNDACDHVLERPAVENMLCMICSKVQPAAQYCKYCKNCMGRYYCNKCKLWDDDPNKSSYHCDDCGICRIGRGLGDDYFHCKTCGLCLPISVFNTHRCIERSTDCNCPICGEYMFNSRERVIFLSCSHPLHQRCHEEYIRTNYRCPTCYKTIINVNSLFRILDMEIERQPMPYPYNTWISTIRCNDCNSRCDTKYHFLGHKCNSCHSYNTCISSIYKPLDHPQVSIPRLATAEDAGMRRLMGHSWDNSDEDFNIFGIHSFI.

The segment at 135–202 (KEQEILGCSH…AAQYCKYCKN (68 aa)) adopts a CHY-type zinc-finger fold. The Zn(2+) site is built by Cys142, His144, Cys153, Cys156, Cys162, Cys165, His166, His172, Cys184, Cys187, Cys197, Cys200, Cys209, Cys212, His225, Cys226, Cys229, Cys232, His244, Cys245, Cys248, Cys251, His260, and Cys262. The segment at 204–270 (MGRYYCNKCK…RCIERSTDCN (67 aa)) adopts a CTCHY-type zinc-finger fold. The RING-type; atypical zinc-finger motif lies at 271-313 (CPICGEYMFNSRERVIFLSCSHPLHQRCHEEYIRTNYRCPTCY).

This is an uncharacterized protein from Schizosaccharomyces pombe (strain 972 / ATCC 24843) (Fission yeast).